A 183-amino-acid chain; its full sequence is Dual-action ribosomal maturation protein DarP (183 aa).

Positions 1 to 23 are disordered; sequence MTKQPDDWLDEVPDNENDDDDDE. The segment covering 7–23 has biased composition (acidic residues); the sequence is DWLDEVPDNENDDDDDE.

The protein belongs to the DarP family.

The protein localises to the cytoplasm. In terms of biological role, member of a network of 50S ribosomal subunit biogenesis factors which assembles along the 30S-50S interface, preventing incorrect 23S rRNA structures from forming. Promotes peptidyl transferase center (PTC) maturation. The chain is Dual-action ribosomal maturation protein DarP from Cronobacter sakazakii (strain ATCC BAA-894) (Enterobacter sakazakii).